The following is a 514-amino-acid chain: Probable outer membrane protein pmp12 (514 aa).

The N-terminal stretch at 1-21 (MTILRNFLTCSALFLALPAAA) is a signal peptide.

The protein belongs to the PMP outer membrane protein family.

It localises to the secreted. The protein resides in the cell wall. It is found in the cell outer membrane. The sequence is that of Probable outer membrane protein pmp12 (pmp12) from Chlamydia pneumoniae (Chlamydophila pneumoniae).